The primary structure comprises 148 residues: Large ribosomal subunit protein uL15 (148 aa).

Over residues 1 to 12 (MSDPIKLHDLRP) the composition is skewed to basic and acidic residues. The tract at residues 1–45 (MSDPIKLHDLRPAKGANKAKTRVGRGEASKGKTAGRGTKGTKARN) is disordered.

The protein belongs to the universal ribosomal protein uL15 family. In terms of assembly, part of the 50S ribosomal subunit.

In terms of biological role, binds to the 23S rRNA. This Corynebacterium urealyticum (strain ATCC 43042 / DSM 7109) protein is Large ribosomal subunit protein uL15.